The primary structure comprises 485 residues: Serine hydroxymethyltransferase, mitochondrial (485 aa).

An N6-(pyridoxal phosphate)lysine modification is found at lysine 259.

This sequence belongs to the SHMT family. In terms of assembly, homotetramer. Pyridoxal 5'-phosphate is required as a cofactor.

It localises to the mitochondrion. The catalysed reaction is (6R)-5,10-methylene-5,6,7,8-tetrahydrofolate + glycine + H2O = (6S)-5,6,7,8-tetrahydrofolate + L-serine. It participates in one-carbon metabolism; tetrahydrofolate interconversion. Interconversion of serine and glycine. This Candida glabrata (strain ATCC 2001 / BCRC 20586 / JCM 3761 / NBRC 0622 / NRRL Y-65 / CBS 138) (Yeast) protein is Serine hydroxymethyltransferase, mitochondrial (SHM1).